A 298-amino-acid chain; its full sequence is 3-sulfolactaldehyde reductase (298 aa).

NAD(+) contacts are provided by residues 11–12, Asp31, Leu65, and Thr96; that span reads QM. Arg123 contacts 2,3-dihydroxypropane-1-sulfonate. Residue Lys171 is part of the active site. 174 to 178 lines the 2,3-dihydroxypropane-1-sulfonate pocket; the sequence is NNYMS. An NAD(+)-binding site is contributed by Lys240.

Belongs to the HIBADH-related family. 3-sulfolactaldehyde reductase subfamily. Homotetramer. Dimer of dimers.

It carries out the reaction (2S)-3-sulfopropanediol + NAD(+) = (2S)-3-sulfolactaldehyde + NADH + H(+). It catalyses the reaction 4-hydroxybutanoate + NAD(+) = succinate semialdehyde + NADH + H(+). Its activity is regulated as follows. Inhibited by the NADH analogs tetrahydro-NADH and hexahydro-NADH. Its function is as follows. Reduces 3-sulfolactaldehyde (SLA) to 2,3-dihydroxypropane 1-sulfonate (DHPS). Metabolite profiling studies showed that the enzyme also catalyzes in vitro the NADH-dependent reduction of succinic semialdehyde (SSA) to 4-hydroxybutyrate (GHB), and that it could be involved in the metabolism of SSA, and other potentially toxic intermediates that may accumulate under stress conditions. However, the enzyme exhibits a 42,000-fold greater catalytic efficiency for the reduction of SLA over SSA. Shows no detectable activity on the analogous glycolytic intermediate glyceraldehyde-3-phosphate. This is 3-sulfolactaldehyde reductase (yihU) from Escherichia coli (strain K12).